The chain runs to 347 residues: NADH-quinone oxidoreductase subunit H (347 aa).

8 consecutive transmembrane segments (helical) span residues 25–45 (ILFMVVQSLVIFLVVVIVAAM), 95–115 (FMFTLAPAVAMFTALASFAII), 128–148 (IGILFFFAMAGIAVYAVLFGG), 168–188 (ISYEVFLGLSLMGVVALTGSF), 200–220 (GWYIIPQFFGFLTFVVAGVAV), 251–271 (FFIGEYVNVVLISALMTCLFF), 284–304 (FIPPAFWFMIKTLFFMTMFVL), and 324–344 (VCLPVTLINLLVTAAVILIFS).

This sequence belongs to the complex I subunit 1 family. As to quaternary structure, NDH-1 is composed of 14 different subunits. Subunits NuoA, H, J, K, L, M, N constitute the membrane sector of the complex.

The protein resides in the cell inner membrane. The catalysed reaction is a quinone + NADH + 5 H(+)(in) = a quinol + NAD(+) + 4 H(+)(out). NDH-1 shuttles electrons from NADH, via FMN and iron-sulfur (Fe-S) centers, to quinones in the respiratory chain. The immediate electron acceptor for the enzyme in this species is believed to be ubiquinone. Couples the redox reaction to proton translocation (for every two electrons transferred, four hydrogen ions are translocated across the cytoplasmic membrane), and thus conserves the redox energy in a proton gradient. This subunit may bind ubiquinone. The chain is NADH-quinone oxidoreductase subunit H from Psychrobacter cryohalolentis (strain ATCC BAA-1226 / DSM 17306 / VKM B-2378 / K5).